Consider the following 378-residue polypeptide: Quinolinate synthase (378 aa).

Residues H59 and S80 each coordinate iminosuccinate. A [4Fe-4S] cluster-binding site is contributed by C125. Iminosuccinate is bound by residues 151 to 153 (YAN) and S168. [4Fe-4S] cluster is bound at residue C212. Residues 238 to 240 (HPE) and T255 each bind iminosuccinate. C309 is a binding site for [4Fe-4S] cluster.

This sequence belongs to the quinolinate synthase family. Type 1 subfamily. [4Fe-4S] cluster is required as a cofactor.

The protein resides in the cytoplasm. The catalysed reaction is iminosuccinate + dihydroxyacetone phosphate = quinolinate + phosphate + 2 H2O + H(+). It functions in the pathway cofactor biosynthesis; NAD(+) biosynthesis; quinolinate from iminoaspartate: step 1/1. Its function is as follows. Catalyzes the condensation of iminoaspartate with dihydroxyacetone phosphate to form quinolinate. The protein is Quinolinate synthase of Burkholderia pseudomallei (strain 1106a).